A 506-amino-acid chain; its full sequence is Glycerol kinase (506 aa).

Thr-12 contributes to the ADP binding site. 3 residues coordinate ATP: Thr-12, Thr-13, and Ser-14. Thr-12 contributes to the sn-glycerol 3-phosphate binding site. Arg-16 serves as a coordination point for ADP. Positions 82, 83, 134, and 246 each coordinate sn-glycerol 3-phosphate. Positions 82, 83, 134, 246, and 247 each coordinate glycerol. Thr-268 and Gly-312 together coordinate ADP. The ATP site is built by Thr-268, Gly-312, Gln-316, and Gly-413. ADP-binding residues include Gly-413 and Asn-417.

The protein belongs to the FGGY kinase family.

The catalysed reaction is glycerol + ATP = sn-glycerol 3-phosphate + ADP + H(+). It functions in the pathway polyol metabolism; glycerol degradation via glycerol kinase pathway; sn-glycerol 3-phosphate from glycerol: step 1/1. Its activity is regulated as follows. Inhibited by fructose 1,6-bisphosphate (FBP). Key enzyme in the regulation of glycerol uptake and metabolism. Catalyzes the phosphorylation of glycerol to yield sn-glycerol 3-phosphate. In Leifsonia xyli subsp. xyli (strain CTCB07), this protein is Glycerol kinase.